A 99-amino-acid chain; its full sequence is Aspartyl/glutamyl-tRNA(Asn/Gln) amidotransferase subunit C (99 aa).

It belongs to the GatC family. As to quaternary structure, heterotrimer of A, B and C subunits.

The enzyme catalyses L-glutamyl-tRNA(Gln) + L-glutamine + ATP + H2O = L-glutaminyl-tRNA(Gln) + L-glutamate + ADP + phosphate + H(+). It carries out the reaction L-aspartyl-tRNA(Asn) + L-glutamine + ATP + H2O = L-asparaginyl-tRNA(Asn) + L-glutamate + ADP + phosphate + 2 H(+). Its function is as follows. Allows the formation of correctly charged Asn-tRNA(Asn) or Gln-tRNA(Gln) through the transamidation of misacylated Asp-tRNA(Asn) or Glu-tRNA(Gln) in organisms which lack either or both of asparaginyl-tRNA or glutaminyl-tRNA synthetases. The reaction takes place in the presence of glutamine and ATP through an activated phospho-Asp-tRNA(Asn) or phospho-Glu-tRNA(Gln). This is Aspartyl/glutamyl-tRNA(Asn/Gln) amidotransferase subunit C from Cupriavidus necator (strain ATCC 17699 / DSM 428 / KCTC 22496 / NCIMB 10442 / H16 / Stanier 337) (Ralstonia eutropha).